A 105-amino-acid chain; its full sequence is Large ribosomal subunit protein bL21 (105 aa).

This sequence belongs to the bacterial ribosomal protein bL21 family. Part of the 50S ribosomal subunit. Contacts protein L20.

In terms of biological role, this protein binds to 23S rRNA in the presence of protein L20. The chain is Large ribosomal subunit protein bL21 from Parafrankia sp. (strain EAN1pec).